A 2073-amino-acid chain; its full sequence is Histone acetyltransferase KAT6B (2073 aa).

The region spanning 1–77 (MVKLANPLYT…LASYKDPDNP (77 aa)) is the SAMD1-like winged helix (WH) domain. A disordered region spans residues 72–97 (KDPDNPGRFSSVKPGTFPKSAKGSRG). An H15 domain is found at 103 to 176 (RNVDWNKLLR…KDGPQYRVNY (74 aa)). 2 consecutive PHD-type zinc fingers follow at residues 213 to 272 (IPIC…CKTC) and 269 to 320 (CKTC…CRPK). Serine 355 bears the Phosphoserine mark. Disordered stretches follow at residues 360–409 (EGSM…RPGA), 442–531 (FTPS…VPSL), 553–583 (TQGQ…TAKS), and 639–663 (VTPQ…PDQD). Residues 361 to 717 (GSMNAFTGRG…ECESGVEDCG (357 aa)) are negatively regulates HAT activity. Polar residues predominate over residues 379 to 399 (KVCTTPSSGHAASGKDSSSRL). Over residues 447–460 (DGRRSRGEIIDFSK) the composition is skewed to basic and acidic residues. The span at 470 to 485 (QKQSCTSHVLATGTTQ) shows a compositional bias: polar residues. Positions 488–499 (KPPPSSLPPPTP) are enriched in pro residues. Positions 501–531 (SGQSPSSQKSSTATSSPSPQSSSSQCSVPSL) are enriched in low complexity. At serine 647 the chain carries Phosphoserine. A Glycyl lysine isopeptide (Lys-Gly) (interchain with G-Cter in SUMO2) cross-link involves residue lysine 673. The 275-residue stretch at 715 to 989 (DCGRYPSVIE…LDPDSLRWTP (275 aa)) folds into the MYST-type HAT domain. Residues 718–1008 (RYPSVIEFGK…EEEREAEKEA (291 aa)) form a catalytic region. A C2HC MYST-type zinc finger spans residues 748 to 773 (LYLCEFCLKYMKSKNILLRHSKKCGW). The segment at 752-1008 (EFCLKYMKSK…EEEREAEKEA (257 aa)) is interaction with BRPF1. Lysine 815 bears the N6-acetyllysine; by autocatalysis mark. Acetyl-CoA is bound by residues 856–860 (SCIMI) and 865–871 (QRQGFGR). Glutamate 891 acts as the Proton donor/acceptor in catalysis. Serine 895 contacts acetyl-CoA. 3 disordered regions span residues 1022–1452 (EQEI…FKEV), 1484–1538 (SCNS…MEID), and 1580–1619 (QSPQ…SPSV). The span at 1025 to 1043 (ILSTRANSRQSPAKVQSKN) shows a compositional bias: polar residues. N6-acetyllysine occurs at positions 1038, 1042, and 1044. Serine 1048 carries the phosphoserine modification. The segment covering 1069–1105 (SEEEEEEEDEEEEEEEEEEEEDEEEEEEEEEEEEEEN) has biased composition (acidic residues). The segment covering 1106–1117 (IQSSPPRLTKPQ) has biased composition (polar residues). The segment covering 1121-1140 (IKRKRPFVLKKKRGRKRRRI) has biased composition (basic residues). The span at 1142–1155 (SSVTTETISETTEV) shows a compositional bias: low complexity. Over residues 1187 to 1200 (PVLRKAFQHQPGKK) the composition is skewed to basic residues. 3 stretches are compositionally biased toward basic and acidic residues: residues 1229 to 1243 (SNLK…EPLK), 1306 to 1315 (RIEEEVKETG), and 1341 to 1350 (EKPEDDLIKP). Over residues 1351–1374 (EEEEEEEEEEEEEEEEEEGEEEEG) the composition is skewed to acidic residues. Basic and acidic residues-rich tracts occupy residues 1378–1390 (VEKD…SQEK) and 1396–1407 (STEKEDSARLDD). A compositionally biased stretch (acidic residues) spans 1408–1417 (HEEEEEEDEE). A compositionally biased stretch (basic and acidic residues) spans 1433–1452 (HMESAEVEKEELPRESFKEV). Positions 1498-1507 (AVPESDEEPP) are enriched in acidic residues. Positions 1513-1529 (QKQDQKNSKEVDTEFKE) are enriched in basic and acidic residues. Positions 1560–2073 (QDCAETQEAC…QSLNGSYMRR (514 aa)) are interaction with RUNX1 and RUNX2. The span at 1580–1591 (QSPQIATTLDDC) shows a compositional bias: polar residues. The span at 1594–1611 (SDHSSPVSSVHSHPGQSV) shows a compositional bias: low complexity.

This sequence belongs to the MYST (SAS/MOZ) family. As to quaternary structure, component of the MOZ/MORF complex composed at least of ING5, KAT6A, KAT6B, MEAF6 and one of BRPF1, BRD1/BRPF2 and BRPF3. Interacts with RUNX1 and RUNX2. In terms of processing, autoacetylated. Autoacetylation at Lys-815 is required for proper function. Ubiquitously expressed, with high levels in heart, pancreas, testis and ovary.

The protein resides in the nucleus. The enzyme catalyses L-lysyl-[protein] + acetyl-CoA = N(6)-acetyl-L-lysyl-[protein] + CoA + H(+). Its function is as follows. Histone acetyltransferase which may be involved in both positive and negative regulation of transcription. Required for RUNX2-dependent transcriptional activation. May be involved in cerebral cortex development. Component of the MOZ/MORF complex which has a histone H3 acetyltransferase activity. This Homo sapiens (Human) protein is Histone acetyltransferase KAT6B (KAT6B).